Consider the following 225-residue polypeptide: Thymidylate kinase (225 aa).

9-16 (GIEGCGKT) contributes to the ATP binding site.

Belongs to the thymidylate kinase family.

The catalysed reaction is dTMP + ATP = dTDP + ADP. In terms of biological role, phosphorylation of dTMP to form dTDP in both de novo and salvage pathways of dTTP synthesis. This Citrifermentans bemidjiense (strain ATCC BAA-1014 / DSM 16622 / JCM 12645 / Bem) (Geobacter bemidjiensis) protein is Thymidylate kinase.